The primary structure comprises 222 residues: C-8 sterol isomerase ERG2 (222 aa).

The chain crosses the membrane as a helical span at residues 3–23; that stretch reads FFPLLLLIGVVGYIMNVLFTT.

It belongs to the ERG2 family.

The protein resides in the endoplasmic reticulum membrane. The enzyme catalyses fecosterol = episterol. The protein operates within steroid metabolism; ergosterol biosynthesis; ergosterol from zymosterol: step 2/5. With respect to regulation, catalytic activity is inhibited by the morphilines tridemorph, fenpropimorph, and fenpropidin. In terms of biological role, C-8 sterol isomerase; part of the third module of ergosterol biosynthesis pathway that includes the late steps of the pathway. ERG2 catalyzes the reaction which results in unsaturation at C-7 in the B ring of sterols and thus converts fecosterol to episterol. The third module or late pathway involves the ergosterol synthesis itself through consecutive reactions that mainly occur in the endoplasmic reticulum (ER) membrane. Firstly, the squalene synthase ERG9 catalyzes the condensation of 2 farnesyl pyrophosphate moieties to form squalene, which is the precursor of all steroids. Squalene synthase is crucial for balancing the incorporation of farnesyl diphosphate (FPP) into sterol and nonsterol isoprene synthesis. Secondly, the squalene epoxidase ERG1 catalyzes the stereospecific oxidation of squalene to (S)-2,3-epoxysqualene, which is considered to be a rate-limiting enzyme in steroid biosynthesis. Then, the lanosterol synthase ERG7 catalyzes the cyclization of (S)-2,3 oxidosqualene to lanosterol, a reaction that forms the sterol core. In the next steps, lanosterol is transformed to zymosterol through a complex process involving various demethylation, reduction and desaturation reactions. The lanosterol 14-alpha-demethylase ERG11 (also known as CYP51) catalyzes C14-demethylation of lanosterol to produce 4,4'-dimethyl cholesta-8,14,24-triene-3-beta-ol, which is critical for ergosterol biosynthesis. The C-14 reductase ERG24 reduces the C14=C15 double bond of 4,4-dimethyl-cholesta-8,14,24-trienol to produce 4,4-dimethyl-cholesta-8,24-dienol. 4,4-dimethyl-cholesta-8,24-dienol is substrate of the C-4 demethylation complex ERG25-ERG26-ERG27 in which ERG25 catalyzes the three-step monooxygenation required for the demethylation of 4,4-dimethyl and 4alpha-methylsterols, ERG26 catalyzes the oxidative decarboxylation that results in a reduction of the 3-beta-hydroxy group at the C-3 carbon to an oxo group, and ERG27 is responsible for the reduction of the keto group on the C-3. ERG28 has a role as a scaffold to help anchor ERG25, ERG26 and ERG27 to the endoplasmic reticulum and ERG29 regulates the activity of the iron-containing C4-methylsterol oxidase ERG25. Then, the sterol 24-C-methyltransferase ERG6 catalyzes the methyl transfer from S-adenosyl-methionine to the C-24 of zymosterol to form fecosterol. The C-8 sterol isomerase ERG2 catalyzes the reaction which results in unsaturation at C-7 in the B ring of sterols and thus converts fecosterol to episterol. The sterol-C5-desaturase ERG3 then catalyzes the introduction of a C-5 double bond in the B ring to produce 5-dehydroepisterol. The C-22 sterol desaturase ERG5 further converts 5-dehydroepisterol into ergosta-5,7,22,24(28)-tetraen-3beta-ol by forming the C-22(23) double bond in the sterol side chain. Finally, ergosta-5,7,22,24(28)-tetraen-3beta-ol is substrate of the C-24(28) sterol reductase ERG4 to produce ergosterol. The polypeptide is C-8 sterol isomerase ERG2 (Saccharomyces cerevisiae (strain ATCC 204508 / S288c) (Baker's yeast)).